We begin with the raw amino-acid sequence, 234 residues long: 2-C-methyl-D-erythritol 4-phosphate cytidylyltransferase (234 aa).

It belongs to the IspD/TarI cytidylyltransferase family. IspD subfamily.

The enzyme catalyses 2-C-methyl-D-erythritol 4-phosphate + CTP + H(+) = 4-CDP-2-C-methyl-D-erythritol + diphosphate. It participates in isoprenoid biosynthesis; isopentenyl diphosphate biosynthesis via DXP pathway; isopentenyl diphosphate from 1-deoxy-D-xylulose 5-phosphate: step 2/6. In terms of biological role, catalyzes the formation of 4-diphosphocytidyl-2-C-methyl-D-erythritol from CTP and 2-C-methyl-D-erythritol 4-phosphate (MEP). In Photobacterium profundum (strain SS9), this protein is 2-C-methyl-D-erythritol 4-phosphate cytidylyltransferase.